The primary structure comprises 359 residues: Aminoacyl tRNA synthase complex-interacting multifunctional protein 1 (359 aa).

Residues 52–92 (AVLKRLEQKGAEADQIIEYLKQQVALLKEKAVLQATLREEK) form a required for fibroblast proliferation region. Positions 100–241 (KLKKEIEELK…APRTVISGLV (142 aa)) are interaction with HSP90B1. A required for endothelial cell death region spans residues 149-163 (SVSTISCSIKEHSKG). Residues 156–196 (SIKEHSKGGGEEKKVKEKTDKKGEKKEKKLQSAAPSADSKP) form a disordered region. Over residues 157 to 185 (IKEHSKGGGEEKKVKEKTDKKGEKKEKKL) the composition is skewed to basic and acidic residues. The required for endothelial cell migration stretch occupies residues 163 to 239 (GGGEEKKVKE…EAAPRTVISG (77 aa)). A Glycyl lysine isopeptide (Lys-Gly) (interchain with G-Cter in SUMO1) cross-link involves residue K184. S187 is modified (phosphoserine). In terms of domain architecture, tRNA-binding spans 198-299 (DVSRLDLRIG…NGSVPGDRIT (102 aa)). K316 is subject to N6-succinyllysine.

In terms of assembly, homodimer. Part of the multisynthetase complex (MSC), a multisubunit complex that groups tRNA ligases for Arg (RARS1), Asp (DARS1), Gln (QARS1), Ile (IARS1), Leu (LARS1), Lys (KARS1), Met (MARS1) the bifunctional ligase for Glu and Pro (EPRS1) and the auxiliary subunits AIMP1/p43, AIMP2/p38 and EEF1E1/p18. Interacts (via N-terminus) with RARS1 (via N-terminus). Part of a complex composed of RARS1, QARS1 and AIMP1. Interacts (via C-terminus) with SMURF2. Interacts (via N-terminus) with HSP90B1/gp96 (via C-terminus). Interacts with PSMA7. Interacts with TARS3. Post-translationally, cleaved by caspase-7 in response to apoptosis to produce EMAP-II.

The protein resides in the nucleus. Its subcellular location is the cytoplasm. It localises to the cytosol. The protein localises to the secreted. It is found in the endoplasmic reticulum. The protein resides in the golgi apparatus. Functionally, non-catalytic component of the multisynthase complex. Stimulates the catalytic activity of cytoplasmic arginyl-tRNA synthase. Binds tRNA. Possesses inflammatory cytokine activity. Negatively regulates TGF-beta signaling through stabilization of SMURF2 by binding to SMURF2 and inhibiting its SMAD7-mediated degradation. Involved in glucose homeostasis through induction of glucagon secretion at low glucose levels. Promotes dermal fibroblast proliferation and wound repair. Regulates KDELR1-mediated retention of HSP90B1/gp96 in the endoplasmic reticulum. Plays a role in angiogenesis by inducing endothelial cell migration at low concentrations and endothelian cell apoptosis at high concentrations. Induces maturation of dendritic cells and monocyte cell adhesion. This is Aminoacyl tRNA synthase complex-interacting multifunctional protein 1 (AIMP1) from Cricetulus griseus (Chinese hamster).